We begin with the raw amino-acid sequence, 293 residues long: 4-hydroxy-tetrahydrodipicolinate synthase (293 aa).

Thr-47 provides a ligand contact to pyruvate. The Proton donor/acceptor role is filled by Tyr-135. Catalysis depends on Lys-164, which acts as the Schiff-base intermediate with substrate. Position 205 (Ile-205) interacts with pyruvate.

Belongs to the DapA family. In terms of assembly, homotetramer; dimer of dimers.

The protein localises to the cytoplasm. The catalysed reaction is L-aspartate 4-semialdehyde + pyruvate = (2S,4S)-4-hydroxy-2,3,4,5-tetrahydrodipicolinate + H2O + H(+). It participates in amino-acid biosynthesis; L-lysine biosynthesis via DAP pathway; (S)-tetrahydrodipicolinate from L-aspartate: step 3/4. Catalyzes the condensation of (S)-aspartate-beta-semialdehyde [(S)-ASA] and pyruvate to 4-hydroxy-tetrahydrodipicolinate (HTPA). This Symbiobacterium thermophilum (strain DSM 24528 / JCM 14929 / IAM 14863 / T) protein is 4-hydroxy-tetrahydrodipicolinate synthase.